The chain runs to 224 residues: PKHD-type hydroxylase Sbal195_0750 (224 aa).

In terms of domain architecture, Fe2OG dioxygenase spans 78 to 176 (QFYPPLFNRY…RTAAFMWLQS (99 aa)). Residues histidine 96, aspartate 98, and histidine 157 each coordinate Fe cation. Arginine 167 is a binding site for 2-oxoglutarate.

The cofactor is Fe(2+). L-ascorbate is required as a cofactor.

The protein is PKHD-type hydroxylase Sbal195_0750 of Shewanella baltica (strain OS195).